Here is a 103-residue protein sequence, read N- to C-terminus: MNEGNRQKAMNLIGLAMRAGKLITGEELTIADIRNEKAKIVFVANDASENTKKKVKDKSSYYEVPCFELFSEAEITQMIGKPRKVFGIVDNGFAKKTKELIEG.

It belongs to the eukaryotic ribosomal protein eL8 family.

RNA-binding protein that recognizes the K-turn motif present in ribosomal RNA, but also in box C/D and box C'/D' sRNAs. This chain is RNA-binding protein YlxQ, found in Enterococcus faecium (Streptococcus faecium).